The chain runs to 285 residues: Polyamine aminopropyltransferase (285 aa).

Residues 5–241 (DSWFTEHFQA…GWWSVTLSSK (237 aa)) enclose the PABS domain. Residue Q35 coordinates S-methyl-5'-thioadenosine. Spermidine contacts are provided by H66 and D90. Residues D110 and 141–142 (DG) each bind S-methyl-5'-thioadenosine. The active-site Proton acceptor is D160. 160–163 (DSTD) contributes to the spermidine binding site. An S-methyl-5'-thioadenosine-binding site is contributed by P167.

This sequence belongs to the spermidine/spermine synthase family. Homodimer or homotetramer.

It localises to the cytoplasm. The catalysed reaction is S-adenosyl 3-(methylsulfanyl)propylamine + putrescine = S-methyl-5'-thioadenosine + spermidine + H(+). Its pathway is amine and polyamine biosynthesis; spermidine biosynthesis; spermidine from putrescine: step 1/1. In terms of biological role, catalyzes the irreversible transfer of a propylamine group from the amino donor S-adenosylmethioninamine (decarboxy-AdoMet) to putrescine (1,4-diaminobutane) to yield spermidine. This Xylella fastidiosa (strain 9a5c) protein is Polyamine aminopropyltransferase.